The sequence spans 372 residues: Chaperone protein DnaJ (372 aa).

The region spanning 5 to 69 (DYYEVLGLTK…QKKARYDQFG (65 aa)) is the J domain. The CR-type zinc finger occupies 129 to 211 (GKETEIEIPK…CRGEGKVQKR (83 aa)). The Zn(2+) site is built by cysteine 142, cysteine 145, cysteine 159, cysteine 162, cysteine 185, cysteine 188, cysteine 199, and cysteine 202. CXXCXGXG motif repeat units lie at residues 142-149 (CETCHGSG), 159-166 (CSTCNGAG), 185-192 (CTTCHGTG), and 199-206 (CSTCRGEG).

This sequence belongs to the DnaJ family. In terms of assembly, homodimer. The cofactor is Zn(2+).

The protein localises to the cytoplasm. In terms of biological role, participates actively in the response to hyperosmotic and heat shock by preventing the aggregation of stress-denatured proteins and by disaggregating proteins, also in an autonomous, DnaK-independent fashion. Unfolded proteins bind initially to DnaJ; upon interaction with the DnaJ-bound protein, DnaK hydrolyzes its bound ATP, resulting in the formation of a stable complex. GrpE releases ADP from DnaK; ATP binding to DnaK triggers the release of the substrate protein, thus completing the reaction cycle. Several rounds of ATP-dependent interactions between DnaJ, DnaK and GrpE are required for fully efficient folding. Also involved, together with DnaK and GrpE, in the DNA replication of plasmids through activation of initiation proteins. This chain is Chaperone protein DnaJ, found in Lysinibacillus sphaericus (strain C3-41).